The chain runs to 418 residues: AP-3 complex subunit mu-1 (418 aa).

In terms of domain architecture, MHD spans 176–417 (NNEAYFDVVE…ITKAGKFQVR (242 aa)).

The protein belongs to the adaptor complexes medium subunit family. As to quaternary structure, adaptor protein complex 3 (AP-3) is a heterotetramer composed of two large adaptins (delta-type subunit AP3D1 and beta-type subunit AP3B1 or AP3B2), a medium adaptin (mu-type subunit AP3M1 or AP3M2) and a small adaptin (sigma-type subunit APS1 or AP3S2). Interacts with AGAP1. AP-3 associates with the BLOC-1 complex.

Its subcellular location is the golgi apparatus. It localises to the cytoplasmic vesicle membrane. Functionally, part of the AP-3 complex, an adaptor-related complex which is not clathrin-associated. The complex is associated with the Golgi region as well as more peripheral structures. It facilitates the budding of vesicles from the Golgi membrane and may be directly involved in trafficking to lysosomes. In concert with the BLOC-1 complex, AP-3 is required to target cargos into vesicles assembled at cell bodies for delivery into neurites and nerve terminals. In Rattus norvegicus (Rat), this protein is AP-3 complex subunit mu-1 (Ap3m1).